We begin with the raw amino-acid sequence, 260 residues long: Putative ATP-binding protein BAB2_1147 (260 aa).

The 224-residue stretch at 5–228 (ISFNNVVMRY…DLPYPRTEAI (224 aa)) folds into the ABC transporter domain. 37 to 44 (GPSGCGKS) is an ATP binding site.

The protein belongs to the ABC transporter superfamily. The complex is composed of two ATP-binding proteins (BAB2_1147), two transmembrane proteins (BAB2_1148) and a solute-binding protein (BAB2_1146).

The protein resides in the cell inner membrane. In terms of biological role, probably part of an ABC transporter complex. Probably Responsible for energy coupling to the transport system. The chain is Putative ATP-binding protein BAB2_1147 from Brucella abortus (strain 2308).